The sequence spans 292 residues: Peroxisomal 2,4-dienoyl-CoA reductase [(3E)-enoyl-CoA-producing] (292 aa).

NADP(+) is bound by residues 35-40 (GGGSGI), 60-64 (RSLPR), and aspartate 86. Arginine 60 contacts substrate. Residues arginine 88, phenylalanine 118, and 126–128 (SFN) contribute to the substrate site. Lysine 151 carries the post-translational modification N6-acetyllysine. NADP(+) is bound by residues lysine 182 and 208–214 (PGAISGT). Residue arginine 219 coordinates substrate. At serine 287 the chain carries Phosphoserine. Positions 290–292 (AKL) match the Microbody targeting signal motif. Lysine 291 carries the post-translational modification N6-acetyllysine.

The protein belongs to the short-chain dehydrogenases/reductases (SDR) family. 2,4-dienoyl-CoA reductase subfamily. Monomer, dimer and oligomer.

It is found in the peroxisome. The enzyme catalyses a (2E,4Z)-dienoyl-CoA + NADPH + H(+) = a 4,5-saturated-(3E)-enoyl-CoA + NADP(+). It catalyses the reaction a (2E,4E)-dienoyl-CoA + NADPH + H(+) = a 4,5-saturated-(3E)-enoyl-CoA + NADP(+). The catalysed reaction is (2E,4E)-hexadienoyl-CoA + NADPH + H(+) = (3E)-hexenoyl-CoA + NADP(+). It carries out the reaction (2E,4E)-decadienoyl-CoA + NADPH + H(+) = (3E)-decenoyl-CoA + NADP(+). The enzyme catalyses (2E,4Z,7Z,10Z,13Z,16Z,19Z)-docosaheptaenoyl-CoA + NADPH + H(+) = (3E,7Z,10Z,13Z,16Z,19Z)-docosahexaenoyl-CoA + NADP(+). Its function is as follows. Auxiliary enzyme of beta-oxidation. Participates in the degradation of unsaturated fatty enoyl-CoA esters having double bonds in both even- and odd-numbered positions in peroxisome. Catalyzes the NADP-dependent reduction of 2,4-dienoyl-CoA to yield trans-3-enoyl-CoA. Has activity towards short and medium chain 2,4-dienoyl-CoAs, but also towards 2,4,7,10,13,16,19-docosaheptaenoyl-CoA, suggesting that it does not constitute a rate limiting step in the peroxisomal degradation of docosahexaenoic acid. This Rattus norvegicus (Rat) protein is Peroxisomal 2,4-dienoyl-CoA reductase [(3E)-enoyl-CoA-producing] (Decr2).